Consider the following 37-residue polypeptide: MKVRASVKKICRNCKVIKRNGVVRVICVEPKHKQRQG.

This sequence belongs to the bacterial ribosomal protein bL36 family.

The sequence is that of Large ribosomal subunit protein bL36 from Aliivibrio fischeri (strain ATCC 700601 / ES114) (Vibrio fischeri).